Reading from the N-terminus, the 93-residue chain is Large ribosomal subunit protein mL41 (93 aa).

The N-terminal 13 residues, 1–13 (MHQSLLCFGARRL), are a transit peptide targeting the mitochondrion.

The protein belongs to the mitochondrion-specific ribosomal protein mL41 family. As to quaternary structure, component of the mitochondrial large ribosomal subunit (mt-LSU). Mature yeast 74S mitochondrial ribosomes consist of a small (37S) and a large (54S) subunit. The 37S small subunit contains a 15S ribosomal RNA (15S mt-rRNA) and at least 32 different proteins. The 54S large subunit contains a 21S rRNA (21S mt-rRNA) and at least 45 different proteins.

It localises to the mitochondrion. In terms of biological role, component of the mitochondrial ribosome (mitoribosome), a dedicated translation machinery responsible for the synthesis of mitochondrial genome-encoded proteins, including at least some of the essential transmembrane subunits of the mitochondrial respiratory chain. The mitoribosomes are attached to the mitochondrial inner membrane and translation products are cotranslationally integrated into the membrane. This chain is Large ribosomal subunit protein mL41 (mrpl27), found in Schizosaccharomyces pombe (strain 972 / ATCC 24843) (Fission yeast).